A 305-amino-acid chain; its full sequence is UDP-3-O-acyl-N-acetylglucosamine deacetylase (305 aa).

Positions 78, 237, and 241 each coordinate Zn(2+). His264 functions as the Proton donor in the catalytic mechanism.

This sequence belongs to the LpxC family. Zn(2+) serves as cofactor.

The catalysed reaction is a UDP-3-O-[(3R)-3-hydroxyacyl]-N-acetyl-alpha-D-glucosamine + H2O = a UDP-3-O-[(3R)-3-hydroxyacyl]-alpha-D-glucosamine + acetate. It participates in glycolipid biosynthesis; lipid IV(A) biosynthesis; lipid IV(A) from (3R)-3-hydroxytetradecanoyl-[acyl-carrier-protein] and UDP-N-acetyl-alpha-D-glucosamine: step 2/6. Functionally, catalyzes the hydrolysis of UDP-3-O-myristoyl-N-acetylglucosamine to form UDP-3-O-myristoylglucosamine and acetate, the committed step in lipid A biosynthesis. The protein is UDP-3-O-acyl-N-acetylglucosamine deacetylase of Paraburkholderia xenovorans (strain LB400).